Reading from the N-terminus, the 892-residue chain is Translation initiation factor IF-2 (892 aa).

A disordered region spans residues 51–296; the sequence is REHGSAPNKL…KGKRKPSTLQ (246 aa). Over residues 68–82 the composition is skewed to polar residues; the sequence is STLNIPSTGGKSKSV. A compositionally biased stretch (basic and acidic residues) spans 99 to 217; sequence EQAKAEEQAQ…KMAAENEGKW (119 aa). Residues 224 to 237 are compositionally biased toward polar residues; that stretch reads QTESADYHVTTSQH. The segment covering 239–254 has biased composition (basic and acidic residues); sequence RAAEDENDAKVEGDRR. The segment covering 255 to 269 has biased composition (basic residues); the sequence is SRTRGGKATKQKKGN. The segment covering 270-283 has biased composition (basic and acidic residues); that stretch reads KLSESKADREEARA. Residues 391-560 enclose the tr-type G domain; sequence HRAPVVTIMG…LLQAEVMELK (170 aa). Positions 400–407 are G1; that stretch reads GHVDHGKT. A GTP-binding site is contributed by 400–407; that stretch reads GHVDHGKT. Residues 425-429 form a G2 region; the sequence is GITQH. Residues 446-449 are G3; the sequence is DTPG. Residues 446–450 and 500–503 each bind GTP; these read DTPGH and NKID. The segment at 500–503 is G4; the sequence is NKID. A G5 region spans residues 536-538; it reads SAK.

The protein belongs to the TRAFAC class translation factor GTPase superfamily. Classic translation factor GTPase family. IF-2 subfamily.

It is found in the cytoplasm. In terms of biological role, one of the essential components for the initiation of protein synthesis. Protects formylmethionyl-tRNA from spontaneous hydrolysis and promotes its binding to the 30S ribosomal subunits. Also involved in the hydrolysis of GTP during the formation of the 70S ribosomal complex. The polypeptide is Translation initiation factor IF-2 (Yersinia enterocolitica serotype O:8 / biotype 1B (strain NCTC 13174 / 8081)).